A 416-amino-acid polypeptide reads, in one-letter code: 3-isopropylmalate dehydratase large subunit (416 aa).

Cys297, Cys357, and Cys360 together coordinate [4Fe-4S] cluster.

Belongs to the aconitase/IPM isomerase family. LeuC type 2 subfamily. Heterodimer of LeuC and LeuD. [4Fe-4S] cluster serves as cofactor.

It carries out the reaction (2R,3S)-3-isopropylmalate = (2S)-2-isopropylmalate. It functions in the pathway amino-acid biosynthesis; L-leucine biosynthesis; L-leucine from 3-methyl-2-oxobutanoate: step 2/4. Its function is as follows. Catalyzes the isomerization between 2-isopropylmalate and 3-isopropylmalate, via the formation of 2-isopropylmaleate. This chain is 3-isopropylmalate dehydratase large subunit, found in Methanoregula boonei (strain DSM 21154 / JCM 14090 / 6A8).